Here is a 138-residue protein sequence, read N- to C-terminus: Cellular retinoic acid-binding protein 2 (138 aa).

A Nuclear localization signal motif is present at residues 21–31; it reads KALGVNMMMRK. Residue lysine 102 forms a Glycyl lysine isopeptide (Lys-Gly) (interchain with G-Cter in SUMO) linkage. 133–135 provides a ligand contact to all-trans-retinoate; sequence RVY.

Belongs to the calycin superfamily. Fatty-acid binding protein (FABP) family. In terms of assembly, interacts with importin alpha. Interacts with RXR and RARA. Sumoylated in response to retinoic acid binding, sumoylation is critical for dissociation from ER and subsequent nuclear translocation. As to expression, embryo and skin of adult mouse.

The protein resides in the cytoplasm. Its subcellular location is the endoplasmic reticulum. The protein localises to the nucleus. In terms of biological role, transports retinoic acid to the nucleus. Regulates the access of retinoic acid to the nuclear retinoic acid receptors. The chain is Cellular retinoic acid-binding protein 2 (Crabp2) from Mus musculus (Mouse).